The primary structure comprises 209 residues: MKRLGAEFYQAPTLELAERLLGKIFVRCEDTGMVTKARIVETEAYLGEGDEACHAWRGMTNRNRAMFGPPGHLYIYFTYGCHYMINIVSEQEGTAGAVLLRAMEPLEGIDRMQERRGTADERALMSGPGKLAQALGIGPELYGSSLLGESCWLEDAPEIPEELIGTSPRIGITRSTELPWRKFVTASPHVSTTRLGAPKKKRQKRLERR.

A disordered region spans residues 189–209 (HVSTTRLGAPKKKRQKRLERR). Residues 197–209 (APKKKRQKRLERR) show a composition bias toward basic residues.

It belongs to the DNA glycosylase MPG family.

This Chlorobaculum parvum (strain DSM 263 / NCIMB 8327) (Chlorobium vibrioforme subsp. thiosulfatophilum) protein is Putative 3-methyladenine DNA glycosylase.